The primary structure comprises 143 residues: Transcriptional regulator MraZ (143 aa).

SpoVT-AbrB domains are found at residues 5–47 (THSP…SQKE) and 76–119 (ASDE…DADA).

The protein belongs to the MraZ family. In terms of assembly, forms oligomers.

The protein localises to the cytoplasm. The protein resides in the nucleoid. The chain is Transcriptional regulator MraZ from Paenarthrobacter aurescens (strain TC1).